Reading from the N-terminus, the 501-residue chain is Lysine--tRNA ligase (501 aa).

Residues Glu-406 and Glu-413 each coordinate Mg(2+).

It belongs to the class-II aminoacyl-tRNA synthetase family. In terms of assembly, homodimer. The cofactor is Mg(2+).

Its subcellular location is the cytoplasm. It carries out the reaction tRNA(Lys) + L-lysine + ATP = L-lysyl-tRNA(Lys) + AMP + diphosphate. The chain is Lysine--tRNA ligase (lysS) from Halalkalibacterium halodurans (strain ATCC BAA-125 / DSM 18197 / FERM 7344 / JCM 9153 / C-125) (Bacillus halodurans).